The primary structure comprises 176 residues: ATP-dependent protease subunit HslV (176 aa).

Threonine 2 is an active-site residue. The Na(+) site is built by glycine 157, cysteine 160, and threonine 163.

Belongs to the peptidase T1B family. HslV subfamily. In terms of assembly, a double ring-shaped homohexamer of HslV is capped on each side by a ring-shaped HslU homohexamer. The assembly of the HslU/HslV complex is dependent on binding of ATP.

The protein localises to the cytoplasm. The enzyme catalyses ATP-dependent cleavage of peptide bonds with broad specificity.. Its activity is regulated as follows. Allosterically activated by HslU binding. Protease subunit of a proteasome-like degradation complex believed to be a general protein degrading machinery. The protein is ATP-dependent protease subunit HslV of Salmonella gallinarum (strain 287/91 / NCTC 13346).